Consider the following 185-residue polypeptide: DNA-directed RNA polymerase 22 kDa subunit (185 aa).

The protein belongs to the poxviridae DNA-directed RNA polymerase 22 kDa subunit family. In terms of assembly, the DNA-dependent RNA polymerase used for intermediate and late genes expression consists of eight subunits Rpo30/OPG66, Rpo7/OPG90, Rpo22/OPG103, Rpo147/OPG105, Rpo18/OPG119, Rpo19/OPG131, Rpo132/OPG151 and Rpo35/OPG156. The same holoenzyme, with the addition of the transcription-specificity factor OPG109, is used for early gene expression.

Its subcellular location is the virion. It catalyses the reaction RNA(n) + a ribonucleoside 5'-triphosphate = RNA(n+1) + diphosphate. Part of the DNA-dependent RNA polymerase which catalyzes the transcription of viral DNA into RNA using the four ribonucleoside triphosphates as substrates. Responsible for the transcription of early, intermediate and late genes. DNA-dependent RNA polymerase associates with the early transcription factor (ETF), itself composed of OPG118 and OPG133, thereby allowing the early genes transcription. Late transcription, and probably also intermediate transcription, require newly synthesized RNA polymerase. This chain is DNA-directed RNA polymerase 22 kDa subunit (OPG103), found in Cynomys gunnisoni (Gunnison's prairie dog).